The chain runs to 603 residues: Sulfoacetaldehyde acetyltransferase (603 aa).

Belongs to the TPP enzyme family. Mg(2+) is required as a cofactor. Requires thiamine diphosphate as cofactor.

The catalysed reaction is acetyl phosphate + sulfite + H(+) = sulfoacetaldehyde + phosphate. In terms of biological role, catalyzes the degradation of sulfoacetaldehyde into sulfite and acetyl phosphate. Involved in sulfolactate degradation. The chain is Sulfoacetaldehyde acetyltransferase from Roseovarius nubinhibens (strain ATCC BAA-591 / DSM 15170 / ISM).